The primary structure comprises 1377 residues: MKEIKDFEKIRIKIASPDQIRSWSYGEVKKSETINYRTLRPEKDGLFCERIFGTTKEWECYCGKFKSIRYKGIICDRCNVEVTHFKVRRERMGHIELSAPVAHIWYYKYIPSRIGLLLDITASNLNSILYYEKYIVIEPGDTDLKKMQLLNEDEYSEAKERYGMSFSASMGAEAIKTLLENLDLDELSSKLRLQMIDKDDKTDKKLLRRLEIIENFKISGNKPEWMIMDVLPVIPPEIRPMVQLDGGRFATSDLNDLYRRVINRNNRLRKLLLLNAPEIIVRNEKRMLQESVDSLFDNSHKRKVVKGTSNRPLKSLSDALKGKQGRFRQNLLGKRVDYSGRSVIVVGPELKLHQCGIPAKMALELFKPFVIRKLIESEAVFNIKRAKSLIEQEVDEVWQILDNVIKEHPVLLNRAPTLHRLGIQAFEPVLVEGKAIKLHPLVCHAYNADFDGDQMAVHVPLTPAAQAESWALMLSTNNLLNPANGHPIVFPSQDIVLGLYYLTMERKNVMGEGRKFSNFNHVLLAINNKSLDYNAQIYVKVGEEYIKTTAGRVVFSEALPGKISFVNKTLSDYELQTLISEVYVIYGSSIVIEMLDIIKELGFRYATKFGCTISMSDIIVPQEKKVYVEKANREIAKIQNDYTKGVITGEERYNNVVSVWSKTNEELTNKMMEILKKDRDGFNVIYMMADSGARGSRNQIRQLAGMRGLMAKTSGDIIELPIISNFKEGLSVIEFFISTNGARKGLADTALKTADAGYLTRRLVDIAQDVVVRIEDCGTINGIKVEALKNGEEIIEPLREKAVGSYSIERIKSPITGEIILDVNEEITEDKIKLLETVGIDKLVIRSVLTCEAEHGVCQKCYGRDFSNNKPVSIGEAVGIIAAQSIGQPGTQLTMRTFHIGGVAQAGSEDDKIALKNAFILNGLEGFNVQVDGGLLFTRKGVLRIINVIYEESIKKIKKLKVSDSQKVIKGMSLFIDKSGVEVLSSHIGYIKIKDNKLMIVSEEQEISLKVGTRLEINVGDYVEAGRVIGTFDPFAEPIIAEVKGKIKFKDIILGTTLKEEINLETGNIEKRITDQVFESLDPRILIINDRGVEIASYVLPGDAYLQVEDGQDIDIGDIIAKLSKGSEKTQDITGGLPRVNDLFETRIPKNLTEMAKVSGVVQFKAIQKGKRLINVIDEYGVEHKHYIPAGKHLLVRDGDVVRAGDMLCDGRINPHDVLEILGGISLQEFLLAEIQDVYRKQGVSINDKHIGVIIKQMMKKVKIVSVGDTNFVYNQKVDKHAFYEQNKRVIEQGGEPAVASPILIGITKASLNIDSFISAASFQETTKVLTDASIAGSIDDLRGLKENVVIGHLIPTGTGMNLYKRVKVRENSNSEV.

Positions 60, 62, 75, and 78 each coordinate Zn(2+). Residues D449, D451, and D453 each coordinate Mg(2+). 4 residues coordinate Zn(2+): C777, C851, C858, and C861.

It belongs to the RNA polymerase beta' chain family. The RNAP catalytic core consists of 2 alpha, 1 beta, 1 beta' and 1 omega subunit. When a sigma factor is associated with the core the holoenzyme is formed, which can initiate transcription. Mg(2+) is required as a cofactor. The cofactor is Zn(2+).

The enzyme catalyses RNA(n) + a ribonucleoside 5'-triphosphate = RNA(n+1) + diphosphate. In terms of biological role, DNA-dependent RNA polymerase catalyzes the transcription of DNA into RNA using the four ribonucleoside triphosphates as substrates. This is DNA-directed RNA polymerase subunit beta' from Borrelia recurrentis (strain A1).